Reading from the N-terminus, the 269-residue chain is Formamidopyrimidine-DNA glycosylase (269 aa).

Pro-2 functions as the Schiff-base intermediate with DNA in the catalytic mechanism. Glu-3 acts as the Proton donor in catalysis. Catalysis depends on Lys-57, which acts as the Proton donor; for beta-elimination activity. DNA is bound by residues His-90, Arg-109, and Lys-150. Residues 235–269 form an FPG-type zinc finger; that stretch reads QVYGRKGEPCRVCGTPIVATKHAQRATFYCRHCQK. The active-site Proton donor; for delta-elimination activity is Arg-259.

It belongs to the FPG family. As to quaternary structure, monomer. Requires Zn(2+) as cofactor.

It carries out the reaction Hydrolysis of DNA containing ring-opened 7-methylguanine residues, releasing 2,6-diamino-4-hydroxy-5-(N-methyl)formamidopyrimidine.. It catalyses the reaction 2'-deoxyribonucleotide-(2'-deoxyribose 5'-phosphate)-2'-deoxyribonucleotide-DNA = a 3'-end 2'-deoxyribonucleotide-(2,3-dehydro-2,3-deoxyribose 5'-phosphate)-DNA + a 5'-end 5'-phospho-2'-deoxyribonucleoside-DNA + H(+). Involved in base excision repair of DNA damaged by oxidation or by mutagenic agents. Acts as a DNA glycosylase that recognizes and removes damaged bases. Has a preference for oxidized purines, such as 7,8-dihydro-8-oxoguanine (8-oxoG). Has AP (apurinic/apyrimidinic) lyase activity and introduces nicks in the DNA strand. Cleaves the DNA backbone by beta-delta elimination to generate a single-strand break at the site of the removed base with both 3'- and 5'-phosphates. In Salmonella enteritidis PT4 (strain P125109), this protein is Formamidopyrimidine-DNA glycosylase.